Reading from the N-terminus, the 276-residue chain is Mitochondrial outer membrane protein porin 1 (276 aa).

It belongs to the eukaryotic mitochondrial porin (TC 1.B.8.1) family. In terms of tissue distribution, expressed in shoot meristems, root meristematic zone, lateral roots, leaves, stigma and anthers.

Its subcellular location is the mitochondrion outer membrane. Its function is as follows. Forms a channel through the mitochondrial outer membrane that allows diffusion of small hydrophilic molecules. The channel adopts an open conformation at low or zero membrane potential and a closed conformation at potentials above 30-40 mV. The open state has a weak anion selectivity whereas the closed state is cation-selective. Involved in plant development at reproductive stage, is important for pollen development and may regulate hydrogen peroxide generation during disease resistance. The sequence is that of Mitochondrial outer membrane protein porin 1 (VDAC1) from Arabidopsis thaliana (Mouse-ear cress).